Reading from the N-terminus, the 1333-residue chain is Elongator complex protein 1 (1333 aa).

A phosphoserine mark is found at serine 805, serine 1172, and serine 1175. A mediates dimerization region spans residues 886–1333; that stretch reads VDVNELFNHS…RSQWKLSLLE (448 aa). The disordered stretch occupies residues 1175–1209; it reads SGSEMSGRYSHSNSRISARSSKNRRKAERKKHSLK. The tract at residues 1192–1210 is required for binding to tRNA; the sequence is ARSSKNRRKAERKKHSLKE. Positions 1195–1207 are enriched in basic residues; the sequence is SKNRRKAERKKHS.

It belongs to the ELP1/IKA1 family. In terms of assembly, homodimer; dimerization promotes ELP1 stability and elongator complex formation. Component of the elongator complex which consists of ELP1, ELP2, ELP3, ELP4, ELP5 and ELP6. Interacts preferentially with MAP3K14/NIK followed by IKK-alpha and IKK-beta. Post-translationally, phosphorylated. As to expression, in the testis, expression is restricted to germ cells during spermatogenesis with no expression detected in somatic cells such as Sertoli cells or Leydig cells (at protein level). In the ovary, expressed in oocytes of primary, secondary and antral follicles (at protein level). Widely expressed in adult tissues with highest levels in brain and also expressed at all embryonic stages.

The protein resides in the cytoplasm. Its subcellular location is the nucleus. It functions in the pathway tRNA modification; 5-methoxycarbonylmethyl-2-thiouridine-tRNA biosynthesis. In terms of biological role, component of the elongator complex which is required for multiple tRNA modifications, including mcm5U (5-methoxycarbonylmethyl uridine), mcm5s2U (5-methoxycarbonylmethyl-2-thiouridine), and ncm5U (5-carbamoylmethyl uridine). The elongator complex catalyzes the formation of carboxymethyluridine in the wobble base at position 34 in tRNAs. Regulates the migration and branching of projection neurons in the developing cerebral cortex, through a process depending on alpha-tubulin acetylation. ELP1 binds to tRNA, mediating interaction of the elongator complex with tRNA. May act as a scaffold protein that assembles active IKK-MAP3K14 complexes (IKKA, IKKB and MAP3K14/NIK). The chain is Elongator complex protein 1 (Elp1) from Mus musculus (Mouse).